A 92-amino-acid chain; its full sequence is C-C motif chemokine 4 (92 aa).

The signal sequence occupies residues 1–23 (MKLCVTVLSLLMLVAAFCSPALS). 2 cysteine pairs are disulfide-bonded: Cys34/Cys58 and Cys35/Cys74.

The protein belongs to the intercrine beta (chemokine CC) family. In terms of assembly, homodimer and heterodimer of MIP-1-alpha(4-69) and MIP-1-beta(3-69). In terms of processing, N-terminal processed form MIP-1-beta(3-69) is produced by proteolytic cleavage after secretion from peripheral blood lymphocytes.

The protein localises to the secreted. Functionally, monokine with inflammatory and chemokinetic properties. Binds to CCR5. One of the major HIV-suppressive factors produced by CD8+ T-cells. Recombinant MIP-1-beta induces a dose-dependent inhibition of different strains of HIV-1, HIV-2, and simian immunodeficiency virus (SIV). The processed form MIP-1-beta(3-69) retains the abilities to induce down-modulation of surface expression of the chemokine receptor CCR5 and to inhibit the CCR5-mediated entry of HIV-1 in T-cells. MIP-1-beta(3-69) is also a ligand for CCR1 and CCR2 isoform B. This chain is C-C motif chemokine 4 (CCL4), found in Homo sapiens (Human).